The chain runs to 155 residues: Protein FAM162A (155 aa).

A required for proapoptotic activity region spans residues 77 to 103 (RFKKEEEIPETISFEMLDAAKNKLRVK). Residues 104–121 (VSYLMIALTVAGCIYMVI) traverse the membrane as a helical segment.

This sequence belongs to the UPF0389 family. Interacts with HSP90AB1; HSP90AB1 is essential for FAM162A mitochondrial localization and pro-apoptotic activity. Interacts with VDAC2; the interaction is probably involved in inducing mitochondrial permeability transition.

The protein localises to the mitochondrion membrane. Proposed to be involved in regulation of apoptosis; the exact mechanism may differ between cell types/tissues. May be involved in hypoxia-induced cell death of transformed cells implicating cytochrome C release and caspase activation (such as CASP9) and inducing mitochondrial permeability transition. May be involved in hypoxia-induced cell death of neuronal cells probably by promoting release of AIFM1 from mitochondria to cytoplasm and its translocation to the nucleus; however, the involvement of caspases has been reported conflictingly. The polypeptide is Protein FAM162A (Fam162a) (Mus musculus (Mouse)).